A 415-amino-acid polypeptide reads, in one-letter code: L-cysteine:1D-myo-inositol 2-amino-2-deoxy-alpha-D-glucopyranoside ligase 2 (415 aa).

Cysteine 44 is a Zn(2+) binding site. Residues 44 to 47 (CGIT), threonine 59, and 82 to 84 (NIT) contribute to the L-cysteinyl-5'-AMP site. The 'HIGH' region signature appears at 46 to 56 (ITPYDSTHLGH). The 'ERGGDP' region signature appears at 188–193 (ERGGDP). Position 228 (tryptophan 228) interacts with L-cysteinyl-5'-AMP. Position 232 (cysteine 232) interacts with Zn(2+). 250–252 (GSD) is an L-cysteinyl-5'-AMP binding site. Residue histidine 257 coordinates Zn(2+). L-cysteinyl-5'-AMP is bound at residue isoleucine 284. The 'KMSKS' region signature appears at 290 to 294 (KMSKS).

The protein belongs to the class-I aminoacyl-tRNA synthetase family. MshC subfamily. As to quaternary structure, monomer. Requires Zn(2+) as cofactor.

The enzyme catalyses 1D-myo-inositol 2-amino-2-deoxy-alpha-D-glucopyranoside + L-cysteine + ATP = 1D-myo-inositol 2-(L-cysteinylamino)-2-deoxy-alpha-D-glucopyranoside + AMP + diphosphate + H(+). In terms of biological role, catalyzes the ATP-dependent condensation of GlcN-Ins and L-cysteine to form L-Cys-GlcN-Ins. This Corynebacterium jeikeium (strain K411) protein is L-cysteine:1D-myo-inositol 2-amino-2-deoxy-alpha-D-glucopyranoside ligase 2.